The sequence spans 312 residues: Glyoxylate/hydroxypyruvate reductase A (312 aa).

R227 is a catalytic residue. H275 acts as the Proton donor in catalysis.

This sequence belongs to the D-isomer specific 2-hydroxyacid dehydrogenase family. GhrA subfamily.

It is found in the cytoplasm. The catalysed reaction is glycolate + NADP(+) = glyoxylate + NADPH + H(+). The enzyme catalyses (R)-glycerate + NAD(+) = 3-hydroxypyruvate + NADH + H(+). It carries out the reaction (R)-glycerate + NADP(+) = 3-hydroxypyruvate + NADPH + H(+). Catalyzes the NADPH-dependent reduction of glyoxylate and hydroxypyruvate into glycolate and glycerate, respectively. This chain is Glyoxylate/hydroxypyruvate reductase A, found in Escherichia fergusonii (strain ATCC 35469 / DSM 13698 / CCUG 18766 / IAM 14443 / JCM 21226 / LMG 7866 / NBRC 102419 / NCTC 12128 / CDC 0568-73).